We begin with the raw amino-acid sequence, 212 residues long: uncharacterized protein (212 aa).

2 disordered regions span residues Met-1–Asn-25 and Ser-165–Gly-212. Residues Arg-202–Gly-212 are compositionally biased toward low complexity.

This is an uncharacterized protein from Escherichia coli (strain K12).